The sequence spans 67 residues: Large ribosomal subunit protein bL31 (67 aa).

Zn(2+) contacts are provided by C16, C18, C36, and C39.

This sequence belongs to the bacterial ribosomal protein bL31 family. Type A subfamily. In terms of assembly, part of the 50S ribosomal subunit. It depends on Zn(2+) as a cofactor.

Binds the 23S rRNA. The chain is Large ribosomal subunit protein bL31 from Desulforudis audaxviator (strain MP104C).